A 276-amino-acid chain; its full sequence is NADPH-dependent 7-cyano-7-deazaguanine reductase (276 aa).

83 to 85 contacts substrate; it reads IES. An NADPH-binding site is contributed by 85–86; sequence SK. Catalysis depends on Cys184, which acts as the Thioimide intermediate. Asp191 acts as the Proton donor in catalysis. 223–224 is a binding site for substrate; it reads HE. Residue 252–253 participates in NADPH binding; that stretch reads RG.

Belongs to the GTP cyclohydrolase I family. QueF type 2 subfamily. In terms of assembly, homodimer.

It is found in the cytoplasm. It carries out the reaction 7-aminomethyl-7-carbaguanine + 2 NADP(+) = 7-cyano-7-deazaguanine + 2 NADPH + 3 H(+). It participates in tRNA modification; tRNA-queuosine biosynthesis. Its function is as follows. Catalyzes the NADPH-dependent reduction of 7-cyano-7-deazaguanine (preQ0) to 7-aminomethyl-7-deazaguanine (preQ1). The polypeptide is NADPH-dependent 7-cyano-7-deazaguanine reductase (Pseudomonas putida (strain ATCC 700007 / DSM 6899 / JCM 31910 / BCRC 17059 / LMG 24140 / F1)).